The primary structure comprises 233 residues: Ribose-5-phosphate isomerase A (233 aa).

Residues 28 to 31 (TGST), 85 to 88 (DGAD), and 98 to 101 (KGLG) contribute to the substrate site. The active-site Proton acceptor is the E107. Position 125 (K125) interacts with substrate.

This sequence belongs to the ribose 5-phosphate isomerase family. In terms of assembly, homodimer.

It catalyses the reaction aldehydo-D-ribose 5-phosphate = D-ribulose 5-phosphate. It participates in carbohydrate degradation; pentose phosphate pathway; D-ribose 5-phosphate from D-ribulose 5-phosphate (non-oxidative stage): step 1/1. In terms of biological role, catalyzes the reversible conversion of ribose-5-phosphate to ribulose 5-phosphate. This is Ribose-5-phosphate isomerase A from Roseiflexus sp. (strain RS-1).